An 817-amino-acid polypeptide reads, in one-letter code: Exocyst complex component 6 (817 aa).

Coiled-coil stretches lie at residues 87 to 149 and 247 to 270; these read QSFV…DQIA and TDAERAKKIQEEARKNASNVEIEV.

Belongs to the SEC15 family. The exocyst complex is composed of sec-3/exoc1, sec-5/exoc2, sec-6/exoc3, sec-8/exoc4, sec-10/exoc5, sec-15/exoc6, exo-70/exoc7 and exo-84/exoc8.

Component of the exocyst complex involved in the docking of exocytic vesicles with fusion sites on the plasma membrane. The polypeptide is Exocyst complex component 6 (sec-15) (Caenorhabditis elegans).